Consider the following 216-residue polypeptide: Probable nicotinate-nucleotide adenylyltransferase (216 aa).

The protein belongs to the NadD family.

The enzyme catalyses nicotinate beta-D-ribonucleotide + ATP + H(+) = deamido-NAD(+) + diphosphate. It functions in the pathway cofactor biosynthesis; NAD(+) biosynthesis; deamido-NAD(+) from nicotinate D-ribonucleotide: step 1/1. In terms of biological role, catalyzes the reversible adenylation of nicotinate mononucleotide (NaMN) to nicotinic acid adenine dinucleotide (NaAD). The polypeptide is Probable nicotinate-nucleotide adenylyltransferase (Citrifermentans bemidjiense (strain ATCC BAA-1014 / DSM 16622 / JCM 12645 / Bem) (Geobacter bemidjiensis)).